Reading from the N-terminus, the 1124-residue chain is Putative DNA mismatch repair protein mutS homolog L359 (1124 aa).

779–786 (SNNWAGKS) lines the ATP pocket.

This sequence belongs to the DNA mismatch repair MutS family.

May be involved in DNA-mismatch repair. This Acanthamoeba polyphaga (Amoeba) protein is Putative DNA mismatch repair protein mutS homolog L359.